Consider the following 271-residue polypeptide: 2-amino-3,7-dideoxy-D-threo-hept-6-ulosonate synthase (271 aa).

The active-site Proton acceptor is the aspartate 33. 1-deoxy-D-threo-hexo-2,5-diulose 6-phosphate contacts are provided by residues 33–37 and 153–155; these read DHGVS and YPR. The active-site Proton donor is tyrosine 153. Lysine 184 serves as the catalytic Schiff-base intermediate with substrate. 1-deoxy-D-threo-hexo-2,5-diulose 6-phosphate contacts are provided by residues 209-210 and 236-237; these read GG and GR.

Belongs to the DeoC/FbaB aldolase family. ADHS subfamily. Homodecamer.

The enzyme catalyses 1-deoxy-D-threo-hexo-2,5-diulose 6-phosphate + L-aspartate 4-semialdehyde = 2,3-dioxopropyl phosphate + 2-amino-2,3,7-trideoxy-D-lyxo-hept-6-ulosonate. Functionally, catalyzes a transaldol reaction between 6-deoxy-5-ketofructose 1-phosphate (DKFP) and L-aspartate semialdehyde (ASA) with an elimination of hydroxypyruvaldehyde phosphate to yield 2-amino-3,7-dideoxy-D-threo-hept-6-ulosonate (ADH). Plays a key role in an alternative pathway of the biosynthesis of 3-dehydroquinate (DHQ), which is involved in the canonical pathway for the biosynthesis of aromatic amino acids. The protein is 2-amino-3,7-dideoxy-D-threo-hept-6-ulosonate synthase of Methanococcus aeolicus (strain ATCC BAA-1280 / DSM 17508 / OCM 812 / Nankai-3).